The sequence spans 172 residues: MADRDRAGQYYQQQRGQVGETVKGILPEKAPSASQALTVATLFPLGGLLLVLSGLALAASVVGLAVATPVFLIFSPVLVPAALLIGLAVAGFLTSGALGLGGLSSLTFLANTARQAFQRTPDYVEQARRRMAEAAAHAGHKTAQAGHAIQGRADQAGTGAGAGGGAGTKTSS.

The residue at position 2 (alanine 2) is an N-acetylalanine. A polar region spans residues 2–38 (ADRDRAGQYYQQQRGQVGETVKGILPEKAPSASQALT). The segment at 39-110 (VATLFPLGGL…GGLSSLTFLA (72 aa)) is hydrophobic. The next 3 membrane-spanning stretches (helical) occupy residues 42–62 (LFPLGGLLLVLSGLALAASVV), 70–90 (VFLIFSPVLVPAALLIGLAVA), and 91–111 (GFLTSGALGLGGLSSLTFLAN). A disordered region spans residues 147-172 (HAIQGRADQAGTGAGAGGGAGTKTSS). The span at 158 to 172 (TGAGAGGGAGTKTSS) shows a compositional bias: gly residues.

This sequence belongs to the oleosin family.

The protein resides in the lipid droplet. It localises to the membrane. May have a structural role to stabilize the lipid body during desiccation of the seed by preventing coalescence of the oil. Probably interacts with both lipid and phospholipid moieties of lipid bodies. May also provide recognition signals for specific lipase anchorage in lipolysis during seedling growth. This Oryza sativa subsp. indica (Rice) protein is Oleosin 18 kDa (OLE18).